We begin with the raw amino-acid sequence, 470 residues long: tRNA (guanine(37)-N(1))-methyltransferase (470 aa).

S-adenosyl-L-methionine is bound by residues 304 to 305 (DL), 332 to 333 (DG), and N370.

This sequence belongs to the class I-like SAM-binding methyltransferase superfamily. TRM5/TYW2 family. As to quaternary structure, monomer.

The protein localises to the mitochondrion matrix. Its subcellular location is the nucleus. It localises to the cytoplasm. The catalysed reaction is guanosine(37) in tRNA + S-adenosyl-L-methionine = N(1)-methylguanosine(37) in tRNA + S-adenosyl-L-homocysteine + H(+). Specifically methylates the N1 position of guanosine-37 in various cytoplasmic and mitochondrial tRNAs. Methylation is not dependent on the nature of the nucleoside 5' of the target nucleoside. This is the first step in the biosynthesis of wybutosine (yW), a modified base adjacent to the anticodon of tRNAs and required for accurate decoding. The polypeptide is tRNA (guanine(37)-N(1))-methyltransferase (Theileria parva (East coast fever infection agent)).